The following is a 217-amino-acid chain: Nitrile hydratase subunit beta (217 aa).

The protein belongs to the nitrile hydratase subunit beta family. In terms of assembly, heterodimer of an alpha and a beta chain.

The enzyme catalyses an aliphatic primary amide = an aliphatic nitrile + H2O. Functionally, NHase catalyzes the hydration of various nitrile compounds to the corresponding amides. In Pseudomonas putida (Arthrobacter siderocapsulatus), this protein is Nitrile hydratase subunit beta (nthB).